The chain runs to 337 residues: m7GpppX diphosphatase (337 aa).

The disordered stretch occupies residues 1-35 (MADAAPQLGKRKRELDVEEAHAASTEEKEAGVGNG). N-acetylalanine is present on A2. The nuclear localization signal (NLS) motif lies at 10 to 13 (KRKR). Basic and acidic residues predominate over residues 13–30 (RELDVEEAHAASTEEKEA). S24 and S101 each carry phosphoserine. N6-acetyllysine occurs at positions 138 and 142. A nuclear export sequence (NES) motif is present at residues 142 to 154 (KYLRQDLRLIRET). Substrate-binding positions include W175, E185, D205, K207, and 268-279 (HYLPSYYHLHVH). Residues 275–279 (HLHVH) carry the Histidine triad motif motif. H277 (nucleophile) is an active-site residue.

This sequence belongs to the HIT family. In terms of assembly, homodimer. Associates with components of the exosome multienzyme ribonuclease complex, such as EXOSC3 and EXOSC4. Interacts with NDOR1. Detected in liver, brain, kidney, testis and prostate.

The protein resides in the cytoplasm. Its subcellular location is the nucleus. The enzyme catalyses a 5'-end (N(7)-methyl 5'-triphosphoguanosine)-ribonucleoside in mRNA + H2O = N(7)-methyl-GMP + a 5'-end diphospho-ribonucleoside in mRNA + 2 H(+). With respect to regulation, the hydrolytic product 7-methylguanosine diphosphate (m7GDP) efficiently inhibits the decapping scavenger activity and acts as a competitive inhibitor in vitro. Inhibited by 2,4-diaminoquinazoline. Decapping scavenger enzyme that catalyzes the cleavage of a residual cap structure following the degradation of mRNAs by the 3'-&gt;5' exosome-mediated mRNA decay pathway. Hydrolyzes cap analog structures like 7-methylguanosine nucleoside triphosphate (m7GpppG) with up to 10 nucleotide substrates (small capped oligoribonucleotides) and specifically releases 5'-phosphorylated RNA fragments and 7-methylguanosine monophosphate (m7GMP). Cleaves cap analog structures like tri-methyl guanosine nucleoside triphosphate (m3(2,2,7)GpppG) with very poor efficiency. Does not hydrolyze unmethylated cap analog (GpppG) and shows no decapping activity on intact m7GpppG-capped mRNA molecules longer than 25 nucleotides. Does not hydrolyze 7-methylguanosine diphosphate (m7GDP) to m7GMP. May also play a role in the 5'-&gt;3 mRNA decay pathway; m7GDP, the downstream product released by the 5'-&gt;3' mRNA mediated decapping activity, may be also converted by DCPS to m7GMP. Binds to m7GpppG and strongly to m7GDP. Plays a role in first intron splicing of pre-mRNAs. Inhibits activation-induced cell death. The sequence is that of m7GpppX diphosphatase (DCPS) from Homo sapiens (Human).